Here is a 376-residue protein sequence, read N- to C-terminus: Formate dehydrogenase 1 (376 aa).

Substrate contacts are provided by V97 and N121. NAD(+) is bound by residues 176 to 177, D197, 244 to 248, T270, D296, and 325 to 328; these read RI, PLHKD, and HISG.

This sequence belongs to the D-isomer specific 2-hydroxyacid dehydrogenase family. FDH subfamily. Homodimer.

The protein localises to the cytoplasm. The enzyme catalyses formate + NAD(+) = CO2 + NADH. In terms of biological role, catalyzes the NAD(+)-dependent oxidation of formate to carbon dioxide. Formate oxidation is the final step in the methanol oxidation pathway in methylotrophic microorganisms. Has a role in the detoxification of exogenous formate in non-methylotrophic organisms. The sequence is that of Formate dehydrogenase 1 (FDH1) from Saccharomyces cerevisiae (strain YJM789) (Baker's yeast).